The following is a 620-amino-acid chain: Protein regulator of cytokinesis 1 (620 aa).

The required for the interaction with KIF4A stretch occupies residues 1-303; sequence MRRSEVLAEE…IEAIRVELVQ (303 aa). Residues 1-341 form a dimerization region; it reads MRRSEVLAEE…QLHDAEIVRL (341 aa). 3 coiled-coil regions span residues 96–133, 211–304, and 383–463; these read ILQLEKDLRTQVELMRKQKKERKQELKLLQEQDQELCE, SLEN…LVQY, and GNLL…TEML. A spectrin-fold region spans residues 342 to 466; that stretch reads KNYYEVHKEL…QTETEMLYGS (125 aa). The segment covering 446 to 459 has biased composition (basic and acidic residues); the sequence is AKQERQLKNKKQTE. A disordered region spans residues 446–488; the sequence is AKQERQLKNKKQTETEMLYGSAPRTPSKRRGLAPNTPGKARKL. The tract at residues 467-620 is unstructured, Arg/Lys rich; the sequence is APRTPSKRRG…GILNSTNIQS (154 aa). A phosphothreonine; by CDK1 mark is found at T470 and T481. Phosphoserine is present on residues S513, R541, and S571. A disordered region spans residues 517–545; that stretch reads RLPPSGSKPVAASTCSGKKTPRTGRHGAN. T578 is subject to Phosphothreonine. Residues 600–620 form a disordered region; that stretch reads LSKASKSDATSGILNSTNIQS. The span at 606–620 shows a compositional bias: polar residues; it reads SDATSGILNSTNIQS. T616 bears the Phosphothreonine; by PLK1 mark.

This sequence belongs to the MAP65/ASE1 family. In terms of assembly, homodimer. Interacts with the C-terminal Rho-GAP domain and the basic region of RACGAP1. The interaction with RACGAP1 inhibits its GAP activity towards CDC42 in vitro, which may be required for maintaining normal spindle morphology. Interacts (via N-terminus) with the C-terminus of CENPE (via C-terminus); the interaction occurs during late mitosis. Interacts (via N-terminus) with KIF4A (via C-terminus); the interaction is required for the progression of mitosis. Interacts (via N-terminus) with KIF23 (via C-terminus); the interaction occurs during late mitosis. Interacts with KIF14 and KIF20A. Interacts with PLK1. Interacts with KIF20B. Interacts with CCDC66. Post-translationally, phosphorylation by CDK1 in early mitosis holds PRC1 in an inactive monomeric state, during the metaphase to anaphase transition, PRC1 is dephosphorylated, promoting interaction with KIF4A, which then translocates PRC1 along mitotic spindles to the plus ends of antiparallel interdigitating microtubules. Dephosphorylation also promotes MT-bundling activity by allowing dimerization. Phosphorylation by CDK1 prevents PLK1-binding: upon degradation of CDK1 at anaphase and dephosphorylation, it is then phosphorylated by PLK1, leading to cytokinesis. Overexpressed in bladder cancer cells.

It is found in the nucleus. Its subcellular location is the cytoplasm. The protein localises to the cytoskeleton. The protein resides in the spindle pole. It localises to the midbody. It is found in the chromosome. In terms of biological role, key regulator of cytokinesis that cross-links antiparrallel microtubules at an average distance of 35 nM. Essential for controlling the spatiotemporal formation of the midzone and successful cytokinesis. Required for KIF14 localization to the central spindle and midbody. Required to recruit PLK1 to the spindle. Stimulates PLK1 phosphorylation of RACGAP1 to allow recruitment of ECT2 to the central spindle. Acts as an oncogene for promoting bladder cancer cells proliferation, apoptosis inhibition and carcinogenic progression. This Homo sapiens (Human) protein is Protein regulator of cytokinesis 1.